The primary structure comprises 243 residues: Uridylate kinase (243 aa).

ATP is bound at residue 15 to 18 (KLSG). Positions 23–28 (GSEGFG) are involved in allosteric activation by GTP. Gly-57 contributes to the UMP binding site. ATP contacts are provided by Gly-58 and Arg-62. UMP is bound by residues Asp-77 and 138–145 (TGNPFFTT). ATP contacts are provided by Thr-165, Tyr-171, and Asp-174.

Belongs to the UMP kinase family. Homohexamer.

The protein resides in the cytoplasm. The catalysed reaction is UMP + ATP = UDP + ADP. It functions in the pathway pyrimidine metabolism; CTP biosynthesis via de novo pathway; UDP from UMP (UMPK route): step 1/1. Allosterically activated by GTP. Inhibited by UTP. Its function is as follows. Catalyzes the reversible phosphorylation of UMP to UDP. The sequence is that of Uridylate kinase from Vibrio cholerae serotype O1 (strain ATCC 39541 / Classical Ogawa 395 / O395).